A 142-amino-acid chain; its full sequence is DNA-directed RNA polymerase subunit omega (142 aa).

The segment at 104–142 (FNTDADVDQESTDIQDDEVENEMSNQDSEDIDDEVDNEE) is disordered. Acidic residues predominate over residues 108–142 (ADVDQESTDIQDDEVENEMSNQDSEDIDDEVDNEE).

It belongs to the RNA polymerase subunit omega family. As to quaternary structure, the RNAP catalytic core consists of 2 alpha, 1 beta, 1 beta' and 1 omega subunit. When a sigma factor is associated with the core the holoenzyme is formed, which can initiate transcription.

The catalysed reaction is RNA(n) + a ribonucleoside 5'-triphosphate = RNA(n+1) + diphosphate. Its function is as follows. Promotes RNA polymerase assembly. Latches the N- and C-terminal regions of the beta' subunit thereby facilitating its interaction with the beta and alpha subunits. This is DNA-directed RNA polymerase subunit omega from Wolbachia sp. subsp. Brugia malayi (strain TRS).